A 1440-amino-acid polypeptide reads, in one-letter code: Pentatricopeptide repeat-containing protein At3g18110, chloroplastic (1440 aa).

Residues 1 to 44 (MAVSAGALAFPALSVRATLNPEIKDEQANISSTTSSSQKFTYSR) constitute a chloroplast transit peptide. Over residues 63-72 (TPSQTLSSPV) the composition is skewed to polar residues. The disordered stretch occupies residues 63–84 (TPSQTLSSPVSPIAGTPDSGDV). PPR repeat units lie at residues 224 to 258 (RVQVYNAMMGVYSRSGKFSKAQELVDAMRQRGCVP), 259 to 295 (DLISFNTLINARLKSGGLTPNLAVELLDMVRNSGLRP), 296 to 330 (DAITYNTLLSACSRDSNLDGAVKVFEDMEAHRCQP), 331 to 365 (DLWTYNAMISVYGRCGLAAEAERLFMELELKGFFP), 366 to 400 (DAVTYNSLLYAFARERNTEKVKEVYQQMQKMGFGK), 401 to 431 (DEMTYNTIIHMYGKQGQLDLALQLYKDMKGL), 437 to 471 (DAITYTVLIDSLGKANRTVEAAALMSEMLDVGIKP), 472 to 506 (TLQTYSALICGYAKAGKREEAEDTFSCMLRSGTKP), 507 to 541 (DNLAYSVMLDVLLRGNETRKAWGLYRDMISDGHTP), 542 to 572 (SYTLYELMILGLMKENRSDDIQKTIRDMEEL), 608 to 638 (ENDTLLSILGSYSSSGRHSEAFELLEFLKEH), 643 to 678 (KRLITEALIVLHCKVNNLSAALDEYFADPCVHGWCF), 680 to 714 (SSTMYETLLHCCVANEHYAEASQVFSDLRLSGCEA), 715 to 749 (SESVCKSMVVVYCKLGFPETAHQVVNQAETKGFHF), 751 to 785 (CSPMYTDIIEAYGKQKLWQKAESVVGNLRQSGRTP), 786 to 820 (DLKTWNSLMSAYAQCGCYERARAIFNTMMRDGPSP), 821 to 855 (TVESINILLHALCVDGRLEELYVVVEELQDMGFKI), 856 to 890 (SKSSILLMLDAFARAGNIFEVKKIYSSMKAAGYLP), 891 to 925 (TIRLYRMMIELLCKGKRVRDAEIMVSEMEEANFKV), 926 to 960 (ELAIWNSMLKMYTAIEDYKKTVQVYQRIKETGLEP), 961 to 995 (DETTYNTLIIMYCRDRRPEEGYLLMQQMRNLGLDP), 996 to 1030 (KLDTYKSLISAFGKQKCLEQAEQLFEELLSKGLKL), 1031 to 1065 (DRSFYHTMMKISRDSGSDSKAEKLLQMMKNAGIEP), 1066 to 1100 (TLATMHLLMVSYSSSGNPQEAEKVLSNLKDTEVEL), and 1101 to 1135 (TTLPYSSVIDAYLRSKDYNSGIERLLEMKKEGLEP). The interval 1419–1440 (KKKKMGNETNGINTRRKFVRSK) is disordered.

The protein belongs to the PPR family. P subfamily.

It is found in the plastid. The protein resides in the chloroplast. May play a role in embryogenesis. This chain is Pentatricopeptide repeat-containing protein At3g18110, chloroplastic (EMB1270), found in Arabidopsis thaliana (Mouse-ear cress).